We begin with the raw amino-acid sequence, 563 residues long: Ribulokinase (563 aa).

It belongs to the ribulokinase family.

The enzyme catalyses D-ribulose + ATP = D-ribulose 5-phosphate + ADP + H(+). It catalyses the reaction L-ribulose + ATP = L-ribulose 5-phosphate + ADP + H(+). It participates in carbohydrate degradation; L-arabinose degradation via L-ribulose; D-xylulose 5-phosphate from L-arabinose (bacterial route): step 2/3. This chain is Ribulokinase, found in Halalkalibacterium halodurans (strain ATCC BAA-125 / DSM 18197 / FERM 7344 / JCM 9153 / C-125) (Bacillus halodurans).